The chain runs to 427 residues: Histidine--tRNA ligase (427 aa).

This sequence belongs to the class-II aminoacyl-tRNA synthetase family. Homodimer.

It localises to the cytoplasm. The catalysed reaction is tRNA(His) + L-histidine + ATP = L-histidyl-tRNA(His) + AMP + diphosphate + H(+). This chain is Histidine--tRNA ligase (hisS), found in Mycobacterium leprae (strain TN).